The following is a 63-amino-acid chain: Cytochrome c oxidase subunit 7C, mitochondrial (63 aa).

Residues methionine 1 to arginine 16 constitute a mitochondrion transit peptide. The Mitochondrial matrix portion of the chain corresponds to serine 17–asparagine 33. Lysine 25 bears the N6-acetyllysine; alternate mark. Position 25 is an N6-succinyllysine; alternate (lysine 25). Residues lysine 34–leucine 60 traverse the membrane as a helical segment. Residues leucine 61–glutamine 63 lie on the Mitochondrial intermembrane side of the membrane.

Belongs to the cytochrome c oxidase VIIc family. In terms of assembly, component of the cytochrome c oxidase (complex IV, CIV), a multisubunit enzyme composed of 14 subunits. The complex is composed of a catalytic core of 3 subunits MT-CO1, MT-CO2 and MT-CO3, encoded in the mitochondrial DNA, and 11 supernumerary subunits COX4I, COX5A, COX5B, COX6A, COX6B, COX6C, COX7A, COX7B, COX7C, COX8 and NDUFA4, which are encoded in the nuclear genome. The complex exists as a monomer or a dimer and forms supercomplexes (SCs) in the inner mitochondrial membrane with NADH-ubiquinone oxidoreductase (complex I, CI) and ubiquinol-cytochrome c oxidoreductase (cytochrome b-c1 complex, complex III, CIII), resulting in different assemblies (supercomplex SCI(1)III(2)IV(1) and megacomplex MCI(2)III(2)IV(2)). Interacts with RAB5IF.

Its subcellular location is the mitochondrion inner membrane. The protein operates within energy metabolism; oxidative phosphorylation. In terms of biological role, component of the cytochrome c oxidase, the last enzyme in the mitochondrial electron transport chain which drives oxidative phosphorylation. The respiratory chain contains 3 multisubunit complexes succinate dehydrogenase (complex II, CII), ubiquinol-cytochrome c oxidoreductase (cytochrome b-c1 complex, complex III, CIII) and cytochrome c oxidase (complex IV, CIV), that cooperate to transfer electrons derived from NADH and succinate to molecular oxygen, creating an electrochemical gradient over the inner membrane that drives transmembrane transport and the ATP synthase. Cytochrome c oxidase is the component of the respiratory chain that catalyzes the reduction of oxygen to water. Electrons originating from reduced cytochrome c in the intermembrane space (IMS) are transferred via the dinuclear copper A center (CU(A)) of subunit 2 and heme A of subunit 1 to the active site in subunit 1, a binuclear center (BNC) formed by heme A3 and copper B (CU(B)). The BNC reduces molecular oxygen to 2 water molecules using 4 electrons from cytochrome c in the IMS and 4 protons from the mitochondrial matrix. The protein is Cytochrome c oxidase subunit 7C, mitochondrial (COX7C) of Papio hamadryas (Hamadryas baboon).